Consider the following 2345-residue polypeptide: Acetyl-CoA carboxylase 1 (2345 aa).

Methionine 1 carries the post-translational modification N-acetylmethionine. A phosphoserine mark is found at serine 5, serine 23, serine 25, serine 29, serine 34, serine 47, serine 49, and serine 52. The residue at position 57 (threonine 57) is a Phosphothreonine. Position 77 is a phosphoserine (serine 77). Position 79 is a phosphoserine; by AMPK (serine 79). Residues valine 116–alanine 617 form the Biotin carboxylation domain. The region spanning serine 274–methionine 465 is the ATP-grasp domain. Glycine 314–glycine 319 contacts ATP. 3 residues coordinate Mg(2+): glutamate 423, glutamate 436, and asparagine 438. Mn(2+) contacts are provided by glutamate 423, glutamate 436, and asparagine 438. Residue arginine 440 is part of the active site. Threonine 609 carries the phosphothreonine modification. A Biotinyl-binding domain is found at phenylalanine 744–glutamine 818. Lysine 785 is subject to N6-biotinyllysine. Serine 834 carries the post-translational modification Phosphoserine. A phosphoserine; by AMPK; in vitro mark is found at serine 1200 and serine 1215. Residue serine 1217 is modified to Phosphoserine. Threonine 1226 bears the Phosphothreonine mark. Phosphoserine occurs at positions 1258, 1262, and 1272. Lysine 1333 is modified (N6-acetyllysine). One can recognise a CoA carboxyltransferase N-terminal domain in the interval proline 1575–asparagine 1913. Residues proline 1575 to serine 2233 form a carboxyltransferase region. CoA contacts are provided by arginine 1822, lysine 2126, and arginine 2128. One can recognise a CoA carboxyltransferase C-terminal domain in the interval proline 1917 to serine 2233. Threonine 2152 is subject to Phosphothreonine.

Monomer, homodimer, and homotetramer. Can form filamentous polymers. Interacts in its inactive phosphorylated form with the BRCT domains of BRCA1 which prevents ACACA dephosphorylation and inhibits lipid synthesis. Interacts with MID1IP1; interaction with MID1IP1 promotes oligomerization and increases its activity. Requires Mg(2+) as cofactor. Mn(2+) is required as a cofactor. The cofactor is biotin. In terms of processing, the N-terminus is blocked. Post-translationally, phosphorylation on Ser-1262 is required for interaction with BRCA1. Phosphorylation at Ser-79 by AMPK inactivates enzyme activity. Phosphorylated in vitro at Ser-1200 and Ser-1215 by AMPK; the relevance of phosphorylation of these sites in vivo is however unclear. In terms of processing, the biotin cofactor is covalently attached to the central biotinyl-binding domain and is required for the catalytic activity.

It localises to the cytoplasm. The protein localises to the cytosol. It carries out the reaction hydrogencarbonate + acetyl-CoA + ATP = malonyl-CoA + ADP + phosphate + H(+). The protein operates within lipid metabolism; malonyl-CoA biosynthesis; malonyl-CoA from acetyl-CoA: step 1/1. Its activity is regulated as follows. Inhibited by phosphorylation. Citrate promotes oligomerization of the protein into filaments that correspond to the most active form of the carboxylase. Cytosolic enzyme that catalyzes the carboxylation of acetyl-CoA to malonyl-CoA, the first and rate-limiting step of de novo fatty acid biosynthesis. This is a 2 steps reaction starting with the ATP-dependent carboxylation of the biotin carried by the biotin carboxyl carrier (BCC) domain followed by the transfer of the carboxyl group from carboxylated biotin to acetyl-CoA. The protein is Acetyl-CoA carboxylase 1 of Rattus norvegicus (Rat).